Here is a 466-residue protein sequence, read N- to C-terminus: MTLKASEGESGGSMHTALSDLYLEHLLQKRSRPEAVSHPLNTVTEDMYTNGSPAPGSPAQVKGQEVRKVRLIQFEKVTEEPMGITLKLNEKQSCTVARILHGGMIHRQGSLHVGDEILEINGTNVTNHSVDQLQKAMKETKGMISLKVIPNQQSRLPALQMFMRAQFDYDPKKDNLIPCKEAGLKFATGDIIQIINKDDSNWWQGRVEGSSKESAGLIPSPELQEWRVASVAQSAPSEAPSCSPFGKKKKYKDKYLAKHSSIFDQLDVVSYEEVVRLPAFKRKTLVLIGASGVGRSHIKNALLSQNPEKFVYPVPYTTRPPRKSEEDGKEYHFISTEEMTRNISANEFLEFGSYQGNMFGTKFETVHQIHKQDKIAILDIEPQTLKIVRTAELSPFIVFIAPTDQGTQTEALQQLQKDSEAIRSQYAHYFDLSLVNNGVDETLKKLQEAFDQACSSPQWVPVSWVY.

Position 2 is an N-acetylthreonine (Thr-2). A phosphoserine mark is found at Ser-13 and Ser-19. The residue at position 49 (Thr-49) is a Phosphothreonine. Residues Ser-52, Ser-57, and Ser-110 each carry the phosphoserine modification. The PDZ domain occupies 71–152 (LIQFEKVTEE…MISLKVIPNQ (82 aa)). One can recognise an SH3 domain in the interval 158–228 (ALQMFMRAQF…PSPELQEWRV (71 aa)). Ser-243 carries the phosphoserine modification. Positions 268 to 466 (VVSYEEVVRL…PQWVPVSWVY (199 aa)) are interaction with PALS1. Positions 282 to 451 (RKTLVLIGAS…TLKKLQEAFD (170 aa)) constitute a Guanylate kinase-like domain.

It belongs to the MAGUK family. As to quaternary structure, heterodimer with PALS1. Interacts with DLG5 and NF2. Interacts (via guanylate kinase-like domain) with WHRN (via third PDZ domain). Post-translationally, palmitoylated.

Its subcellular location is the cell membrane. The protein resides in the cell projection. The protein localises to the stereocilium. Essential regulator of neutrophil polarity. Regulates neutrophil polarization by regulating AKT1 phosphorylation through a mechanism that is independent of PIK3CG activity. This is 55 kDa erythrocyte membrane protein (MPP1) from Pongo abelii (Sumatran orangutan).